Consider the following 482-residue polypeptide: UDP-N-acetylmuramoyl-L-alanyl-D-glutamate--2,6-diaminopimelate ligase (482 aa).

Residue Ser-24 coordinates UDP-N-acetyl-alpha-D-muramoyl-L-alanyl-D-glutamate. ATP is bound at residue 105–111 (GTNGKTT). UDP-N-acetyl-alpha-D-muramoyl-L-alanyl-D-glutamate contacts are provided by residues 147–148 (TT), Ser-174, Gln-180, and Arg-182. Lys-214 carries the N6-carboxylysine modification. Residues Arg-378, 402–405 (DNPR), Gly-453, and Glu-457 each bind meso-2,6-diaminopimelate. Residues 402–405 (DNPR) carry the Meso-diaminopimelate recognition motif motif.

This sequence belongs to the MurCDEF family. MurE subfamily. Mg(2+) is required as a cofactor. Carboxylation is probably crucial for Mg(2+) binding and, consequently, for the gamma-phosphate positioning of ATP.

It localises to the cytoplasm. It catalyses the reaction UDP-N-acetyl-alpha-D-muramoyl-L-alanyl-D-glutamate + meso-2,6-diaminopimelate + ATP = UDP-N-acetyl-alpha-D-muramoyl-L-alanyl-gamma-D-glutamyl-meso-2,6-diaminopimelate + ADP + phosphate + H(+). Its pathway is cell wall biogenesis; peptidoglycan biosynthesis. Its function is as follows. Catalyzes the addition of meso-diaminopimelic acid to the nucleotide precursor UDP-N-acetylmuramoyl-L-alanyl-D-glutamate (UMAG) in the biosynthesis of bacterial cell-wall peptidoglycan. In Lawsonia intracellularis (strain PHE/MN1-00), this protein is UDP-N-acetylmuramoyl-L-alanyl-D-glutamate--2,6-diaminopimelate ligase.